A 345-amino-acid polypeptide reads, in one-letter code: MKTFQITRPDETIREALTDKINNLTKPKGSLGTLEELALQIGLIQQTLTPELRHPQNIIFAADHGIVDEGVSLSPKEITWQQISNFLHGGAGVNFLCRQHGFELKIVDAGVDYDLPYEKGIINMKVRKSSRNYLYEAAMTEEEMNLCIERGAEVVRQCHAEGCNVLSLGEMGIGNTSSSSMWMTCFTHIPLELCVGAGSGLDNAGVHHKYNVLQQALDHYQGDGSAHDLIRYFGGLEMVMAIGAMLQAAELKMIILVDGFIMTNCILAASQLYPEVLHYAIFGHQGDEAGHKLVLDAMGAKPLLNLGLRLGEGTGAICSYPIIDSAIRMINEMDNFAHAAITKYF.

The Proton acceptor role is filled by Glu-312.

It belongs to the CobT family.

It catalyses the reaction 5,6-dimethylbenzimidazole + nicotinate beta-D-ribonucleotide = alpha-ribazole 5'-phosphate + nicotinate + H(+). It participates in nucleoside biosynthesis; alpha-ribazole biosynthesis; alpha-ribazole from 5,6-dimethylbenzimidazole: step 1/2. In terms of biological role, catalyzes the synthesis of alpha-ribazole-5'-phosphate from nicotinate mononucleotide (NAMN) and 5,6-dimethylbenzimidazole (DMB). The polypeptide is Nicotinate-nucleotide--dimethylbenzimidazole phosphoribosyltransferase (Bacteroides fragilis (strain YCH46)).